The chain runs to 275 residues: NH(3)-dependent NAD(+) synthetase (275 aa).

46–53 (GISGGQDS) contacts ATP. Aspartate 52 provides a ligand contact to Mg(2+). Arginine 140 serves as a coordination point for deamido-NAD(+). An ATP-binding site is contributed by threonine 160. Position 165 (glutamate 165) interacts with Mg(2+). Positions 173 and 180 each coordinate deamido-NAD(+). Residues lysine 189 and threonine 211 each coordinate ATP. 260–261 (HK) contributes to the deamido-NAD(+) binding site.

The protein belongs to the NAD synthetase family. As to quaternary structure, homodimer.

It catalyses the reaction deamido-NAD(+) + NH4(+) + ATP = AMP + diphosphate + NAD(+) + H(+). It functions in the pathway cofactor biosynthesis; NAD(+) biosynthesis; NAD(+) from deamido-NAD(+) (ammonia route): step 1/1. Its function is as follows. Catalyzes the ATP-dependent amidation of deamido-NAD to form NAD. Uses ammonia as a nitrogen source. The sequence is that of NH(3)-dependent NAD(+) synthetase from Escherichia coli O127:H6 (strain E2348/69 / EPEC).